Consider the following 123-residue polypeptide: Large ribosomal subunit protein uL14 (123 aa).

This sequence belongs to the universal ribosomal protein uL14 family. As to quaternary structure, part of the 50S ribosomal subunit. Forms a cluster with proteins L3 and L19. In the 70S ribosome, L14 and L19 interact and together make contacts with the 16S rRNA in bridges B5 and B8.

Its function is as follows. Binds to 23S rRNA. Forms part of two intersubunit bridges in the 70S ribosome. The sequence is that of Large ribosomal subunit protein uL14 from Hamiltonella defensa subsp. Acyrthosiphon pisum (strain 5AT).